The primary structure comprises 342 residues: Ferredoxin--NADP reductase (342 aa).

FAD is bound by residues cysteine 17, aspartate 36, glutamine 44, tyrosine 49, valine 89, phenylalanine 124, aspartate 289, and threonine 330.

This sequence belongs to the ferredoxin--NADP reductase type 2 family. Homodimer. FAD serves as cofactor.

The enzyme catalyses 2 reduced [2Fe-2S]-[ferredoxin] + NADP(+) + H(+) = 2 oxidized [2Fe-2S]-[ferredoxin] + NADPH. The chain is Ferredoxin--NADP reductase from Bradyrhizobium sp. (strain BTAi1 / ATCC BAA-1182).